The sequence spans 98 residues: NADH-ubiquinone oxidoreductase chain 4L (98 aa).

3 helical membrane-spanning segments follow: residues 1 to 21 (MTSINLNLTMAFSLALTGVLV), 28 to 48 (STLLCLEGMMLSLFILMALLI), and 59 to 79 (APLILLVFSACEAGVGLALLV).

Belongs to the complex I subunit 4L family. Core subunit of respiratory chain NADH dehydrogenase (Complex I) which is composed of 45 different subunits.

It is found in the mitochondrion inner membrane. The catalysed reaction is a ubiquinone + NADH + 5 H(+)(in) = a ubiquinol + NAD(+) + 4 H(+)(out). Core subunit of the mitochondrial membrane respiratory chain NADH dehydrogenase (Complex I) which catalyzes electron transfer from NADH through the respiratory chain, using ubiquinone as an electron acceptor. Part of the enzyme membrane arm which is embedded in the lipid bilayer and involved in proton translocation. The protein is NADH-ubiquinone oxidoreductase chain 4L (MT-ND4L) of Dactylopsila trivirgata (Striped possum).